The primary structure comprises 308 residues: Isoflavone reductase-like protein (308 aa).

NADP(+) is bound by residues 11 to 17 (GGTGYIG), Arg-36, and Lys-45. Lys-133 (proton acceptor) is an active-site residue. Arg-137 contacts NADP(+).

The protein belongs to the NmrA-type oxidoreductase family. Isoflavone reductase subfamily. As to quaternary structure, homodimer.

The protein resides in the cytoplasm. The polypeptide is Isoflavone reductase-like protein (Olea europaea (Common olive)).